A 261-amino-acid polypeptide reads, in one-letter code: Short-chain dehydrogenase/reductase AFUA_1G00990 (261 aa).

The NADP(+) site is built by Leu-19, Asp-67, Asn-94, Tyr-169, Lys-173, and Thr-213. Tyr-169 serves as the catalytic Proton donor. Lys-173 serves as the catalytic Lowers pKa of active site Tyr.

The protein belongs to the short-chain dehydrogenases/reductases (SDR) family.

Short-chain dehydrogenase/reductase; part of the gene cluster that mediates the biosynthesis of fumigermin that inhibits germination of spores of the inducing S.rapamycinicus, and thus helps the fungus to defend resources in the shared habitat against a bacterial competitor. The partially reducing polyketide synthase fngA alone is sufficient for the production of fumigermin. FgnA catalyzes the condensation of 3 malonyl-CoA units to an acetyl-CoA starter, and 3 methylations to yield fumigermin. It is remarkable that the five cluster genes including fgnA are conserved in distantly related fungi, supporting the assumption of a fumigermin cluster; it is thus possible that originally all five genes were functional, but that the genes encoding tailoring enzymes became inactive from mutations, similar to the case of the fgnA gene in strains A1163 and Af293. The protein is Short-chain dehydrogenase/reductase AFUA_1G00990 of Aspergillus fumigatus (strain ATCC MYA-4609 / CBS 101355 / FGSC A1100 / Af293) (Neosartorya fumigata).